A 340-amino-acid chain; its full sequence is Entry-fusion complex protein OPG094 (340 aa).

Positions 1 to 20 (MGGGVSVELPKRDPPPGVPT) are disordered. A lipid anchor (N-myristoyl glycine; by host) is attached at G2. Residues 2 to 319 (GGGVSVELPK…VQHNIKHSFD (318 aa)) are Virion surface-facing. A helical; Signal-anchor for type II membrane protein membrane pass occupies residues 320–340 (LKLHLISLLSLLVIWILIVAI).

It belongs to the orthopoxvirus OPG086 family. In terms of assembly, interacts with OPG143. Component of the entry fusion complex (EFC) composed of OPG053, OPG076, OPG086, OPG094, OPG095, OPG099, OPG107, OPG143, OPG104, OPG147 and OPG155. Except for OPG095 and OPG053, each of the EFC proteins is required for assembly or stability of the complex. In terms of processing, unglycosylated because produced in viral factories instead of the classic ER -Golgi route.

Its subcellular location is the virion membrane. Component of the entry fusion complex (EFC), which consists of 11 proteins. During cell infection, this complex mediates entry of the virion core into the host cytoplasm by a two-step mechanism consisting of lipid mixing of the viral and cellular membranes and subsequent pore formation. The chain is Entry-fusion complex protein OPG094 (OPG094) from Homo sapiens (Human).